The sequence spans 92 residues: MGRSLKKGPFCDDHLMKKIEKLNETGQKQVIKTWSRRSTIFPQFIGHTIAVYDGRKHVPVYITEDMVGHKLGEFAPTRTYKGHAADDKKTKR.

It belongs to the universal ribosomal protein uS19 family.

In terms of biological role, protein S19 forms a complex with S13 that binds strongly to the 16S ribosomal RNA. This chain is Small ribosomal subunit protein uS19, found in Anoxybacillus flavithermus (strain DSM 21510 / WK1).